The sequence spans 437 residues: Transcription factor AP-2-alpha (437 aa).

A Glycyl lysine isopeptide (Lys-Gly) (interchain with G-Cter in SUMO); alternate cross-link involves residue Lys-10. Lys-10 is covalently cross-linked (Glycyl lysine isopeptide (Lys-Gly) (interchain with G-Cter in SUMO2); alternate). A disordered region spans residues 14–107 (CEDRHDGTSN…GQRQSQESGL (94 aa)). The PPxY motif signature appears at 57-62 (YFPPPY). Low complexity-rich tracts occupy residues 65 to 74 (IYPQSQDPYS) and 88 to 101 (QPQP…GQRQ). Glycyl lysine isopeptide (Lys-Gly) (interchain with G-Cter in SUMO2) cross-links involve residues Lys-177 and Lys-184. Ser-239 is modified (phosphoserine; by PKA). An H-S-H (helix-span-helix), dimerization region spans residues 280–410 (RRKAANVTLL…YLTEALKAMD (131 aa)). A compositionally biased stretch (polar residues) spans 414-427 (LSNNPNSHTDNNAK). The tract at residues 414 to 437 (LSNNPNSHTDNNAKSSDKEEKHRK) is disordered. Positions 428 to 437 (SSDKEEKHRK) are enriched in basic and acidic residues.

It belongs to the AP-2 family. Binds DNA as a dimer. Can form homodimers or heterodimers with other AP-2 family members. Interacts with WWOX. Interacts with CITED4. Interacts with UBE2I. Interacts with RALBP1 in a complex also containing EPN1 and NUMB during interphase and mitosis. Interacts with KCTD1; this interaction represses transcription activation. Interacts (via C-terminus) with CITED2 (via C-terminus); the interaction stimulates TFAP2A-transcriptional activation. Interacts (via N-terminus) with EP300 (via N-terminus); the interaction requires CITED2. Interacts with KCTD15; this interaction inhibits TFAP2A transcriptional activation. Sumoylated on Lys-10; which inhibits transcriptional activity.

It localises to the nucleus. In terms of biological role, sequence-specific DNA-binding protein that interacts with inducible viral and cellular enhancer elements to regulate transcription of selected genes. AP-2 factors bind to the consensus sequence 5'-GCCNNNGGC-3' and activate genes involved in a large spectrum of important biological functions including proper eye, face, body wall, limb and neural tube development. They also suppress a number of genes including MCAM/MUC18, C/EBP alpha and MYC. AP-2-alpha is the only AP-2 protein required for early morphogenesis of the lens vesicle. Together with the CITED2 coactivator, stimulates the PITX2 P1 promoter transcription activation. Associates with chromatin to the PITX2 P1 promoter region. The sequence is that of Transcription factor AP-2-alpha (TFAP2A) from Homo sapiens (Human).